We begin with the raw amino-acid sequence, 83 residues long: Beta-toxin Ct7 (83 aa).

A signal peptide spans 1–18; that stretch reads MKVLILIIASVLLIGVEC. Residues 19–81 form the LCN-type CS-alpha/beta domain; it reads KDGYPMNSEG…VWDSATNKCG (63 aa). 4 disulfides stabilise this stretch: Cys-29/Cys-80, Cys-33/Cys-54, Cys-40/Cys-61, and Cys-44/Cys-63. Gly-81 bears the Glycine amide mark. Residue Gly-82 is a propeptide.

The protein belongs to the long (4 C-C) scorpion toxin superfamily. Sodium channel inhibitor family. Beta subfamily. In terms of tissue distribution, expressed by the venom gland.

It is found in the secreted. Functionally, beta toxins bind voltage-independently at site-4 of sodium channels (Nav) and shift the voltage of activation toward more negative potentials thereby affecting sodium channel activation and promoting spontaneous and repetitive firing. Is possibly toxic to mice, freshwater shrimp and crickets. This chain is Beta-toxin Ct7, found in Centruroides tecomanus (Scorpion).